A 419-amino-acid chain; its full sequence is 2-amino-3-ketobutyrate coenzyme A ligase, mitochondrial (419 aa).

The transit peptide at 1 to 21 (MWPGNAWRAALFWVPRGRRAQ) directs the protein to the mitochondrion. Lys-45 carries the post-translational modification N6-acetyllysine; alternate. Lys-45 carries the N6-succinyllysine; alternate modification. Position 134 to 135 (134 to 135 (CY)) interacts with pyridoxal 5'-phosphate. His-159 provides a ligand contact to substrate. Residue Lys-187 is modified to N6-acetyllysine; alternate. N6-succinyllysine; alternate is present on Lys-187. Pyridoxal 5'-phosphate-binding positions include Ser-206, 262–265 (TLGK), and 295–296 (SN). At Lys-265 the chain carries N6-(pyridoxal phosphate)lysine. N6-succinyllysine is present on residues Lys-326 and Lys-368. The residue at position 383 (Lys-383) is an N6-acetyllysine; alternate. N6-succinyllysine; alternate is present on Lys-383. Arg-389 is a binding site for substrate.

It belongs to the class-II pyridoxal-phosphate-dependent aminotransferase family. It depends on pyridoxal 5'-phosphate as a cofactor. In terms of tissue distribution, strongly expressed in heart, brain, liver and pancreas. Also found in lung.

Its subcellular location is the mitochondrion. The protein localises to the nucleus. The enzyme catalyses glycine + acetyl-CoA = (2S)-2-amino-3-oxobutanoate + CoA. Pyridoxal phosphate (PLP) dependent enzyme, which catalyzes the cleavage of 2-amino-3-oxobutanoate to glycine and acetyl-CoA. The polypeptide is 2-amino-3-ketobutyrate coenzyme A ligase, mitochondrial (Homo sapiens (Human)).